Here is a 772-residue protein sequence, read N- to C-terminus: Elongin-A (772 aa).

The TFIIS N-terminal domain occupies 4-79 (ESALQVVEKL…AQWKKLVPVE (76 aa)). Basic and acidic residues-rich tracts occupy residues 79-105 (ERNAEPDEQDFEKSNSRKRPRDALQKE) and 136-156 (LSELERPHKVSHGHERRDERK). 2 disordered regions span residues 79 to 403 (ERNA…FEQP) and 418 to 466 (KKKK…EKPA). The residue at position 196 (S196) is a Phosphoserine. Composition is skewed to basic and acidic residues over residues 226–235 (QERHLGEPHG), 253–269 (RPVDAKSDEKASVVSRE), 275–308 (LSKEENRRPPSGDNAREKPPSSGVKKEKDREGSS), 321–343 (SDNHLKKPKHRDPEKAKLDKSKQ), and 372–384 (PEGKVKTNLDRKS). Phosphoserine is present on residues S384 and S387. T394 carries the post-translational modification Phosphothreonine. An N6-acetyllysine modification is found at K434. Positions 434–443 (KGLKKNDSKS) are enriched in basic and acidic residues. S516 is subject to Phosphoserine. Positions 522-681 (EAGFTGRRMN…PPRDVRRRQE (160 aa)) are activation domain. The segment at 550 to 559 (TLHQQCIRVL) is BC-box. The 45-residue stretch at 566–610 (IFEVGGVPYSVLEPVLERCTPDQLYRIEEYNHVLIEETDQLWKVH) folds into the F-box domain. The interval 674–732 (RDVRRRQEKFGTGGAAVPEKIKIKPAPYPMGSSHASASSISFNPSPEEPAYDGPSTSSA) is disordered. Positions 705–714 (SSHASASSIS) are enriched in low complexity.

In terms of assembly, heterotrimer of an A (ELOA, ELOA2 or ELOA3P), ELOB and ELOC subunit. Part of a multisubunit ubiquitin ligase complex consisting of elongin BC complex (ELOB and ELOC), elongin A/ELOA, RBX1 and CUL5. Interacts with ERCC6; the interaction is induced by DNA damaging agents or inhibitors of RNA polymerase II elongation. Interacts (via BC-box) with CUL5.

Its subcellular location is the nucleus. In terms of biological role, SIII, also known as elongin, is a general transcription elongation factor that increases the RNA polymerase II transcription elongation past template-encoded arresting sites. Subunit A is transcriptionally active and its transcription activity is strongly enhanced by binding to the dimeric complex of the SIII regulatory subunits B and C (elongin BC complex). Functionally, as part of a multisubunit complex composed of elongin BC complex (ELOB and ELOC), elongin A/ELOA, RBX1 and CUL5; polyubiquitinates monoubiquitinated POLR2A. The chain is Elongin-A from Homo sapiens (Human).